The sequence spans 206 residues: Thiamine-phosphate synthase (206 aa).

Residues glutamine 38–lysine 42 and asparagine 70 contribute to the 4-amino-2-methyl-5-(diphosphooxymethyl)pyrimidine site. The Mg(2+) site is built by aspartate 71 and aspartate 90. Threonine 109 contacts 4-amino-2-methyl-5-(diphosphooxymethyl)pyrimidine. Threonine 135–threonine 137 is a 2-[(2R,5Z)-2-carboxy-4-methylthiazol-5(2H)-ylidene]ethyl phosphate binding site. Lysine 138 provides a ligand contact to 4-amino-2-methyl-5-(diphosphooxymethyl)pyrimidine. 2-[(2R,5Z)-2-carboxy-4-methylthiazol-5(2H)-ylidene]ethyl phosphate-binding positions include glycine 165 and valine 185 to serine 186.

It belongs to the thiamine-phosphate synthase family. Requires Mg(2+) as cofactor.

The catalysed reaction is 2-[(2R,5Z)-2-carboxy-4-methylthiazol-5(2H)-ylidene]ethyl phosphate + 4-amino-2-methyl-5-(diphosphooxymethyl)pyrimidine + 2 H(+) = thiamine phosphate + CO2 + diphosphate. It carries out the reaction 2-(2-carboxy-4-methylthiazol-5-yl)ethyl phosphate + 4-amino-2-methyl-5-(diphosphooxymethyl)pyrimidine + 2 H(+) = thiamine phosphate + CO2 + diphosphate. The enzyme catalyses 4-methyl-5-(2-phosphooxyethyl)-thiazole + 4-amino-2-methyl-5-(diphosphooxymethyl)pyrimidine + H(+) = thiamine phosphate + diphosphate. The protein operates within cofactor biosynthesis; thiamine diphosphate biosynthesis; thiamine phosphate from 4-amino-2-methyl-5-diphosphomethylpyrimidine and 4-methyl-5-(2-phosphoethyl)-thiazole: step 1/1. In terms of biological role, condenses 4-methyl-5-(beta-hydroxyethyl)thiazole monophosphate (THZ-P) and 2-methyl-4-amino-5-hydroxymethyl pyrimidine pyrophosphate (HMP-PP) to form thiamine monophosphate (TMP). The chain is Thiamine-phosphate synthase from Fusobacterium nucleatum subsp. nucleatum (strain ATCC 25586 / DSM 15643 / BCRC 10681 / CIP 101130 / JCM 8532 / KCTC 2640 / LMG 13131 / VPI 4355).